Reading from the N-terminus, the 397-residue chain is Acetate kinase (397 aa).

Mg(2+) is bound at residue Asn-8. Lys-15 is an ATP binding site. Arg-89 is a substrate binding site. Asp-146 acts as the Proton donor/acceptor in catalysis. Residues His-206–Gly-210, Asp-281–Arg-283, and Gly-329–Asn-333 contribute to the ATP site. Residue Glu-382 participates in Mg(2+) binding.

The protein belongs to the acetokinase family. Homodimer. It depends on Mg(2+) as a cofactor. Mn(2+) is required as a cofactor.

The protein resides in the cytoplasm. It catalyses the reaction acetate + ATP = acetyl phosphate + ADP. It participates in metabolic intermediate biosynthesis; acetyl-CoA biosynthesis; acetyl-CoA from acetate: step 1/2. Catalyzes the formation of acetyl phosphate from acetate and ATP. Can also catalyze the reverse reaction. The sequence is that of Acetate kinase from Bacillus cereus (strain ATCC 14579 / DSM 31 / CCUG 7414 / JCM 2152 / NBRC 15305 / NCIMB 9373 / NCTC 2599 / NRRL B-3711).